The primary structure comprises 252 residues: Flagellar brake protein YcgR (252 aa).

The 119-residue stretch at 118–236 folds into the PilZ domain; that stretch reads QRREYFRVSI…EKGLQRAIFE (119 aa).

Belongs to the YcgR family. Monomer. Interacts with the flagellar basal bodies.

It is found in the bacterial flagellum basal body. Functionally, acts as a flagellar brake, regulating swimming and swarming in a bis-(3'-5') cyclic diguanylic acid (c-di-GMP)-dependent manner. Binds 1 c-di-GMP dimer per subunit. Increasing levels of c-di-GMP lead to decreased motility. The sequence is that of Flagellar brake protein YcgR from Yersinia pseudotuberculosis serotype I (strain IP32953).